We begin with the raw amino-acid sequence, 81 residues long: Conotoxin ArMKLT2-0311 (81 aa).

Positions 1–22 (MKLTCVLIVALLFLTACQLTTA) are cleaved as a signal peptide. A compositionally biased stretch (basic and acidic residues) spans 23-34 (DDSRDKQEDPLV). The tract at residues 23–45 (DDSRDKQEDPLVRSHRKMQKSED) is disordered. Residues 23 to 51 (DDSRDKQEDPLVRSHRKMQKSEDPKMAER) constitute a propeptide that is removed on maturation. 3 cysteine pairs are disulfide-bonded: Cys52–Cys67, Cys59–Cys71, and Cys66–Cys80.

The protein belongs to the conotoxin O1 superfamily. As to expression, expressed by the venom duct.

The protein resides in the secreted. The protein is Conotoxin ArMKLT2-0311 of Conus arenatus (Sand-dusted cone).